The primary structure comprises 124 residues: Ribosome-binding factor A (124 aa).

It belongs to the RbfA family. In terms of assembly, monomer. Binds 30S ribosomal subunits, but not 50S ribosomal subunits or 70S ribosomes.

Its subcellular location is the cytoplasm. Its function is as follows. One of several proteins that assist in the late maturation steps of the functional core of the 30S ribosomal subunit. Associates with free 30S ribosomal subunits (but not with 30S subunits that are part of 70S ribosomes or polysomes). Required for efficient processing of 16S rRNA. May interact with the 5'-terminal helix region of 16S rRNA. The polypeptide is Ribosome-binding factor A (Thiobacillus denitrificans (strain ATCC 25259 / T1)).